The sequence spans 2213 residues: Protein sidekick-1 (2213 aa).

The segment at 1–73 (MARGARPSAA…GAGRCGGRRA (73 aa)) is disordered. The span at 23-38 (AGPGRPRGSPPGRARP) shows a compositional bias: low complexity. Ig-like C2-type domains are found at residues 104-186 (PYFK…SEVQ), 191-277 (GSFM…SPFI), 293-378 (PTIV…RATA), 386-476 (PYFT…LDVT), and 480-569 (PVFT…ATLT). A disulfide bond links C126 and C169. N-linked (GlcNAc...) asparagine glycosylation is found at N271 and N301. Disulfide bonds link C315–C362, C408–C458, and C501–C553. N-linked (GlcNAc...) asparagine glycans are attached at residues N550, N563, and N572. In terms of domain architecture, Ig-like C2-type 6 spans 574–663 (TSIVHPPEDH…GNDSRMARLE (90 aa)). An intrachain disulfide couples C595 to C647. Residues N655, N679, N782, N821, N882, N1015, and N1024 are each glycosylated (N-linked (GlcNAc...) asparagine). Fibronectin type-III domains are found at residues 670–766 (SPQN…LPEE), 771–867 (PPKN…TLQG), 872–970 (PPQN…TQED), 974–1068 (AVGH…VPPD), 1072–1171 (APSN…TLQA), 1176–1274 (APTS…TRES), 1279–1376 (APEN…TKDD), 1380–1474 (PPVR…TEKR), 1479–1576 (PPRE…TLQD), 1581–1699 (PPGS…VGEA), 1704–1800 (APQN…THQA), 1804–1899 (APSF…AGPA), and 1902–2000 (SPGS…SAQV). N-linked (GlcNAc...) asparagine glycosylation is found at N1282 and N1333. N1654, N1748, N1767, N1819, and N1893 each carry an N-linked (GlcNAc...) asparagine glycan. The helical transmembrane segment at 2010–2030 (FLLVMALSSLIVILLVVFALV) threads the bilayer. The Cytoplasmic portion of the chain corresponds to 2031–2213 (LHGQNKKYKN…TPLTGFSSFV (183 aa)). The disordered stretch occupies residues 2075–2098 (STFSKKNGTRSPPRPSPGGLHYSD). A PDZ-binding motif is present at residues 2207-2213 (TGFSSFV).

This sequence belongs to the sidekick family. As to quaternary structure, homodimer; mediates homophilic interactions to promote cell adhesion. Up-regulated in glomeruli in HIV-associated nephropathy. In diseased glomeruli, significantly overexpressed and the expression is no longer restricted to mesangial cells but includes podocytes and parietal epithelial cells.

The protein resides in the cell membrane. It localises to the synapse. Adhesion molecule that promotes lamina-specific synaptic connections in the retina. Expressed in specific subsets of interneurons and retinal ganglion cells (RGCs) and promotes synaptic connectivity via homophilic interactions. The chain is Protein sidekick-1 from Homo sapiens (Human).